Here is a 686-residue protein sequence, read N- to C-terminus: MARDLLFEIGTEEMPAGLIGKIRSDLKDLAINTLEDKRLDFKECKVFSTPRRLVLFVKELAEKQEEKREVVKGPARSIAFEDDGTPTRAAKGFSRAQGVEVDDLIIKDDYVYVEKIEQGQDTAGLLKDILPGLINKLPLPRSMRWADYNFKFIRPIRWLLALFGEEIISFSMAGVQSGAYTRGHRFLVKDRLEVKDPDHYFDVMEKGYIIVDHNKRRELILKQIREIEKEIGKVMVEDDLLTEVVDLVEYPTAFYGKFDRSYLELPDDVLITSMAEHQRYFPVIDEDGSLSPYFVGVRDGIEDYIEEVRYGNEMVLRARLADARFFFEEDLKVSIEERQKELEEIVFQEDLGSMMDKVKRLKQLVIQIGKSLNLKESQLQSLIRAAELSKNDLVTEMVNEFTKLQGVMGREYALINGEDEEVATAIYEQYLPRYSGDRLPQTLYGRILSIADKIDNITSHFSLGMIPSGSQDPFALRRQANGIVNIIIDAQLPLKLSSLLNWSIEVLEPGDKDFVNEEKSFLLQRLETILDERGIRYDIINSVVRVGDDDPNNILSRAEAVMSLRKENPDLFVDLIQGLVRARNLASKGEGNNDINPEYFECREEKELYDIYRKIKDEIQRQFKKKNYLSGLKKLVDVKEPVDNFLDNVVVMVEDERIKNNRLALLQEISNLVSGVMNISEIALDD.

It belongs to the class-II aminoacyl-tRNA synthetase family. Tetramer of two alpha and two beta subunits.

It localises to the cytoplasm. It catalyses the reaction tRNA(Gly) + glycine + ATP = glycyl-tRNA(Gly) + AMP + diphosphate. The chain is Glycine--tRNA ligase beta subunit from Halothermothrix orenii (strain H 168 / OCM 544 / DSM 9562).